The sequence spans 384 residues: Trophoblast glycoprotein-like (384 aa).

The first 30 residues, 1–30, serve as a signal peptide directing secretion; sequence MAPRAGQRGLWSPLPGLLLLAAALSRPAAP. 2 cysteine pairs are disulfide-bonded: Cys-31/Cys-37 and Cys-35/Cys-47. Residues 31-309 lie on the Extracellular side of the membrane; the sequence is CPFQCYCFGS…DVAGPELEAS (279 aa). 5 LRR repeats span residues 61-84, 95-118, 119-142, 173-196, and 198-219; these read PPDARNLTIVGANLTVLRAAAFAG, LPLLTALRLTHNNIEVVEDGAFDG, LPSLAALDLSHNPLRALGYRAFRG, LAELRLLGLVGNALSRLPLAALRL, and RLEQLDARVNALAGLGPDELSA. A glycan (N-linked (GlcNAc...) asparagine) is linked at Asn-66. 2 disulfides stabilise this stretch: Cys-240–Cys-266 and Cys-242–Cys-287. A helical membrane pass occupies residues 310 to 330; that stretch reads YVFFGLVLALIGLIFLMVLYL. Residues 331-384 are Cytoplasmic-facing; that stretch reads NRRGIQRWMHNLREACRDQMEGYHYRYEQDADPRRAPAPAAPAGSRATSPGSGL. The tract at residues 361–384 is disordered; sequence ADPRRAPAPAAPAGSRATSPGSGL. Positions 367-384 are enriched in low complexity; the sequence is PAPAAPAGSRATSPGSGL.

It localises to the membrane. This chain is Trophoblast glycoprotein-like (Tpbgl), found in Mus musculus (Mouse).